Reading from the N-terminus, the 272-residue chain is GATA zinc finger domain-containing protein 1 (272 aa).

A GATA-type zinc finger spans residues 9–33 (CSVCKTTSSSMWKKGPQGEILCHHC). Residues 67–120 (TFASTSAAPPQSNGGGGGKQSKQEIHRRSARLRNTKYKSAPAAEKKVSTKGKGR) form a disordered region. Lys167 is subject to N6-acetyllysine. A Glycyl lysine isopeptide (Lys-Gly) (interchain with G-Cter in SUMO2) cross-link involves residue Lys265.

The protein resides in the nucleus. This is GATA zinc finger domain-containing protein 1 (GATAD1) from Bos taurus (Bovine).